We begin with the raw amino-acid sequence, 262 residues long: Putative hydro-lyase RHA1_ro03475 (262 aa).

This sequence belongs to the D-glutamate cyclase family.

The polypeptide is Putative hydro-lyase RHA1_ro03475 (Rhodococcus jostii (strain RHA1)).